We begin with the raw amino-acid sequence, 76 residues long: ATP synthase subunit 9, mitochondrial (76 aa).

Transmembrane regions (helical) follow at residues 14-34 (MATLGLGGAAIGIALVFVALI) and 52-72 (ILGFALAEACGLFCLMMSFLL).

The protein belongs to the ATPase C chain family. F-type ATPases have 2 components, CF(1) - the catalytic core - and CF(0) - the membrane proton channel. CF(1) has five subunits: alpha(3), beta(3), gamma(1), delta(1), epsilon(1). CF(0) has three main subunits: a, b and c.

It is found in the mitochondrion membrane. Functionally, mitochondrial membrane ATP synthase (F(1)F(0) ATP synthase or Complex V) produces ATP from ADP in the presence of a proton gradient across the membrane which is generated by electron transport complexes of the respiratory chain. F-type ATPases consist of two structural domains, F(1) - containing the extramembraneous catalytic core and F(0) - containing the membrane proton channel, linked together by a central stalk and a peripheral stalk. During catalysis, ATP synthesis in the catalytic domain of F(1) is coupled via a rotary mechanism of the central stalk subunits to proton translocation. Part of the complex F(0) domain. A homomeric c-ring of probably 10 subunits is part of the complex rotary element. In Debaryomyces hansenii (strain ATCC 36239 / CBS 767 / BCRC 21394 / JCM 1990 / NBRC 0083 / IGC 2968) (Yeast), this protein is ATP synthase subunit 9, mitochondrial (ATP9).